The chain runs to 655 residues: p-hydroxybenzoic acid efflux pump subunit AaeB (655 aa).

11 consecutive transmembrane segments (helical) span residues 13–33, 38–58, 69–89, 93–113, 121–141, 152–172, 370–390, 407–427, 431–451, 459–479, and 482–502; these read FAVKLATAIVLALFVGFHFQL, WAVLTAAIVAAGPAFAAGGEP, LRIIGTFIGCIAGLVIIIAMI, LLMILVCCIWAGFCTWISSLV, WGLAGYTALIIVITIQPEPLL, EIVIGIVCAIMADLLFSPRSI, LFWLWTGWTSGSGAMVMIAVV, FIYGTLAALPLGLLYFLVIIP, QSMLLLCISLAVLGFFLGIEV, MGALASTINIIVLDNPMTFHF, and FLDSALGQIVGCVLAFTVILL.

Belongs to the aromatic acid exporter ArAE (TC 2.A.85) family.

Its subcellular location is the cell inner membrane. Forms an efflux pump with AaeA. Could function as a metabolic relief valve, allowing to eliminate certain compounds when they accumulate to high levels in the cell. The protein is p-hydroxybenzoic acid efflux pump subunit AaeB of Escherichia coli (strain K12 / MC4100 / BW2952).